A 252-amino-acid polypeptide reads, in one-letter code: Tumor necrosis factor ligand superfamily member 15 (252 aa).

The Cytoplasmic segment spans residues 1–39; sequence MAEELGLGFGEAVPVEMLPEGCRHRREARTGLAARSKAC. Residues 40–60 traverse the membrane as a helical; Signal-anchor for type II membrane protein segment; it reads LALTCCLLSFPILAGLSTLLM. Over 61-252 the chain is Extracellular; sequence TGQLRIPGKD…DKTFFGAFLI (192 aa). Positions 96–252 constitute a THD domain; that stretch reads PKAHLTIMRQ…DKTFFGAFLI (157 aa). N-linked (GlcNAc...) asparagine glycosylation occurs at asparagine 134. Cysteine 163 and cysteine 203 are joined by a disulfide. Asparagine 230 is a glycosylation site (N-linked (GlcNAc...) asparagine).

The protein belongs to the tumor necrosis factor family. In terms of assembly, homotrimer.

It is found in the membrane. Functionally, receptor for TNFRSF25 and TNFRSF6B. Mediates activation of NF-kappa-B. Inhibits vascular endothelial growth and angiogenesis (in vitro). Promotes activation of caspases and apoptosis. Promotes splenocyte alloactivation. This chain is Tumor necrosis factor ligand superfamily member 15 (Tnfsf15), found in Rattus norvegicus (Rat).